The following is a 320-amino-acid chain: MKRIGILTSGGDAPGMNAAIRAVTKTAIHHGLEVFGIRYGFAGLVAGDFIPLTTENVDHKISEGGTFLYSARFPEFAQEEVQQKGVEQLKKHGIDAVIVIGGDGSYHGALALTRHGVNSVGLPGTIDNDIPYTDYTIGFDSACRTAMDAIDKIRDTASSHHRVFVVNVMGRECGDIAMRVGVASGADAIVIPERPYDVKEIAETIKRGFADGKDHGIIVLAEGVMDAEEFKDELLKYGDFDARANVLAHMQRGGSPTVEDRVNATKMGNYAVNLLLDGKGGLAVGMENGKLNTHDILDLFDSKHQGDFSLLDVNEEMTKD.

Glycine 11 is a binding site for ATP. Arginine 21–lysine 25 provides a ligand contact to ADP. ATP contacts are provided by residues arginine 72–phenylalanine 73 and glycine 102–serine 105. Residue aspartate 103 coordinates Mg(2+). Threonine 125–aspartate 127 is a binding site for substrate. Aspartate 127 functions as the Proton acceptor in the catalytic mechanism. Arginine 154 is an ADP binding site. Substrate is bound by residues arginine 162 and methionine 169–arginine 171. ADP is bound by residues glycine 185–aspartate 187 and lysine 213–histidine 215. Substrate-binding positions include glutamate 222, arginine 243, and histidine 249–arginine 252.

It belongs to the phosphofructokinase type A (PFKA) family. ATP-dependent PFK group I subfamily. Prokaryotic clade 'B1' sub-subfamily. In terms of assembly, homotetramer. It depends on Mg(2+) as a cofactor.

Its subcellular location is the cytoplasm. The catalysed reaction is beta-D-fructose 6-phosphate + ATP = beta-D-fructose 1,6-bisphosphate + ADP + H(+). The protein operates within carbohydrate degradation; glycolysis; D-glyceraldehyde 3-phosphate and glycerone phosphate from D-glucose: step 3/4. Its activity is regulated as follows. Allosterically activated by ADP and other diphosphonucleosides, and allosterically inhibited by phosphoenolpyruvate. Its function is as follows. Catalyzes the phosphorylation of D-fructose 6-phosphate to fructose 1,6-bisphosphate by ATP, the first committing step of glycolysis. This is ATP-dependent 6-phosphofructokinase from Lactobacillus acidophilus (strain ATCC 700396 / NCK56 / N2 / NCFM).